Consider the following 351-residue polypeptide: Phospho-N-acetylmuramoyl-pentapeptide-transferase (351 aa).

The next 10 helical transmembrane spans lie at 3 to 23 (GIIA…PPLI), 51 to 71 (TMGG…AHAV), 76 to 96 (PTVS…VGFL), 113 to 133 (GAKM…VTMF), 152 to 172 (FGPP…IVAT), 181 to 201 (GLDG…VIIG), 223 to 243 (PLDL…FLWF), 250 to 270 (IFMG…LAIT), 275 to 295 (LLLL…IIQV), and 329 to 349 (FWII…LEWM).

This sequence belongs to the glycosyltransferase 4 family. MraY subfamily. Mg(2+) serves as cofactor.

Its subcellular location is the cell membrane. The enzyme catalyses UDP-N-acetyl-alpha-D-muramoyl-L-alanyl-gamma-D-glutamyl-meso-2,6-diaminopimeloyl-D-alanyl-D-alanine + di-trans,octa-cis-undecaprenyl phosphate = di-trans,octa-cis-undecaprenyl diphospho-N-acetyl-alpha-D-muramoyl-L-alanyl-D-glutamyl-meso-2,6-diaminopimeloyl-D-alanyl-D-alanine + UMP. Its pathway is cell wall biogenesis; peptidoglycan biosynthesis. In terms of biological role, catalyzes the initial step of the lipid cycle reactions in the biosynthesis of the cell wall peptidoglycan: transfers peptidoglycan precursor phospho-MurNAc-pentapeptide from UDP-MurNAc-pentapeptide onto the lipid carrier undecaprenyl phosphate, yielding undecaprenyl-pyrophosphoryl-MurNAc-pentapeptide, known as lipid I. This is Phospho-N-acetylmuramoyl-pentapeptide-transferase from Thermobifida fusca (strain YX).